The chain runs to 163 residues: Nucleotide-binding protein GTNG_0630 (163 aa).

Belongs to the YajQ family.

Nucleotide-binding protein. This chain is Nucleotide-binding protein GTNG_0630, found in Geobacillus thermodenitrificans (strain NG80-2).